The sequence spans 122 residues: Atrial gland peptide B (122 aa).

Positions 1–21 (MKANTMFIILCLTLSTLCVSS) are cleaved as a signal peptide. Positions 22–34 (QFTSVLGKIFVTN) are excised as a propeptide. Residue I69 is modified to Isoleucine amide. Residues 73–122 (AAGGMEQSEGQNPETKSHSWRERSVLTPSLLSLGESLESGISKRISINQD) constitute a propeptide that is removed on maturation. The tract at residues 74-95 (AGGMEQSEGQNPETKSHSWRER) is disordered.

It belongs to the molluscan ELH family.

Its subcellular location is the secreted. Functionally, the atrial gland peptide A and peptide B precursors are the source of the 2 peptides that, upon release from this reproductive system gland, initiate the egg-laying process by exciting the bag cell neurons. These neurons, clustered in neural connectives near the abdominal ganglion, in turn release other peptides that act directly on the ganglion and also, via the circulating hemolymph, on many other organs to control the physiological processes of egg-laying. One of these other peptides is the egg-laying hormone. The polypeptide is Atrial gland peptide B (Aplysia californica (California sea hare)).